Reading from the N-terminus, the 259-residue chain is UPF0246 protein PA14_18590 (259 aa).

This sequence belongs to the UPF0246 family.

The chain is UPF0246 protein PA14_18590 from Pseudomonas aeruginosa (strain UCBPP-PA14).